The following is a 484-amino-acid chain: uncharacterized protein (484 aa).

12 consecutive transmembrane segments (helical) span residues 19-39 (LSFG…MIFV), 78-98 (VNWG…WLIV), 110-130 (LFFM…GFII), 134-154 (IFAI…SNYL), 165-185 (FSPF…AGII), 199-219 (IVFL…IILG), 249-269 (TWYW…PFTF), 289-309 (ISVF…TIGL), 321-341 (ISTI…VFVL), 360-380 (LFLF…GVML), 398-418 (FGLI…ITSL), and 440-460 (LGAY…LALL).

The protein resides in the cell membrane. This is an uncharacterized protein from Mesomycoplasma hyopneumoniae (strain J / ATCC 25934 / NCTC 10110) (Mycoplasma hyopneumoniae).